A 73-amino-acid polypeptide reads, in one-letter code: Protein SlyX homolog (73 aa).

This sequence belongs to the SlyX family.

The protein is Protein SlyX homolog of Histophilus somni (strain 2336) (Haemophilus somnus).